Reading from the N-terminus, the 395-residue chain is Elongation factor Tu (395 aa).

The 195-residue stretch at 10–204 (KPHVNVGTIG…AVDEYIPEPV (195 aa)) folds into the tr-type G domain. The interval 19–26 (GHVDHGKT) is G1. 19–26 (GHVDHGKT) contacts GTP. Threonine 26 provides a ligand contact to Mg(2+). The interval 60 to 64 (GITIA) is G2. The tract at residues 81 to 84 (DCPG) is G3. GTP is bound by residues 81–85 (DCPGH) and 136–139 (NKVD). Positions 136–139 (NKVD) are G4. Residues 174-176 (SAL) form a G5 region.

This sequence belongs to the TRAFAC class translation factor GTPase superfamily. Classic translation factor GTPase family. EF-Tu/EF-1A subfamily. In terms of assembly, monomer.

The protein localises to the cytoplasm. It catalyses the reaction GTP + H2O = GDP + phosphate + H(+). GTP hydrolase that promotes the GTP-dependent binding of aminoacyl-tRNA to the A-site of ribosomes during protein biosynthesis. In Exiguobacterium sp. (strain ATCC BAA-1283 / AT1b), this protein is Elongation factor Tu.